Consider the following 474-residue polypeptide: Aspartate ammonia-lyase (474 aa).

L-aspartate-binding residues include Thr105, Ser144, Thr145, Asn146, and Thr191. Residues 322 to 331 (GSSIMPGKVN) are SS loop. Ser323 functions as the Proton acceptor in the catalytic mechanism. 2 residues coordinate L-aspartate: Ser324 and Lys329.

It belongs to the class-II fumarase/aspartase family. Aspartase subfamily. Homotetramer.

The catalysed reaction is L-aspartate = fumarate + NH4(+). Its function is as follows. Lyase involved in the degradation of canavanine, the delta-oxa-analog of arginine, allowing growth on canavanine as sole nitrogen and carbon source. Probably catalyzes the conversion of L-aspartate to fumarate and ammonia. This is Aspartate ammonia-lyase from Pseudomonas canavaninivorans.